The sequence spans 859 residues: ATP-dependent DNA helicase PIF1 (859 aa).

Residues 1–45 (MPKWIRSTLNHIIPRRPFICSFNSFLLLKNVSHAKLSFSMSSRGF) constitute a mitochondrion transit peptide. S70 and S72 each carry phosphoserine. A compositionally biased stretch (polar residues) spans 142-157 (NSFDQSSQKKSRSTGF). A disordered region spans residues 142–183 (NSFDQSSQKKSRSTGFKNPLRPALKKESSFDELQNSSISQER). At S169 the chain carries Phosphoserine. The span at 172–182 (DELQNSSISQE) shows a compositional bias: polar residues. Residue 258-265 (GSAGTGKS) participates in ATP binding. S584 carries the phosphoserine modification. A DNA-binding region spans residues 727–746 (QAYVALSRAVSREGLQVLNF). Positions 782-859 (KRKLDYAPGP…GQDTEDHILE (78 aa)) are disordered. The span at 800-809 (KSNSPAPISA) shows a compositional bias: low complexity. Basic and acidic residues predominate over residues 844–859 (VSDEPRGQDTEDHILE).

It belongs to the helicase family. PIF1 subfamily. In terms of assembly, monomer in solution. DNA binding induces dimerization. Associates with mitochondrial and telomeric DNA. Binding to mtDNA is non-specific and the protein seems to coat the entire mtDNA molecule. Binds to the telomerase RNA TLC1. Interacts with the mitochondrial single-strand DNA-binding protein RIM1. Mg(2+) serves as cofactor. The cofactor is Mn(2+). Phosphorylated. Undergoes RAD53-dependent phosphorylation in response to loss of mtDNA.

Its subcellular location is the nucleus. It is found in the nucleolus. The protein resides in the mitochondrion inner membrane. It catalyses the reaction Couples ATP hydrolysis with the unwinding of duplex DNA at the replication fork by translocating in the 5'-3' direction. This creates two antiparallel DNA single strands (ssDNA). The leading ssDNA polymer is the template for DNA polymerase III holoenzyme which synthesizes a continuous strand.. It carries out the reaction ATP + H2O = ADP + phosphate + H(+). In terms of biological role, DNA-dependent ATPase and 5'-3' DNA helicase required for the maintenance of both mitochondrial and nuclear genome stability. Efficiently unwinds G-quadruplex (G4) DNA structures and forked RNA-DNA hybrids. Appears to move along DNA in single nucleotide or base pair steps, powered by hydrolysis of 1 molecule of ATP. Processes at an unwinding rate of about 75 bp/s. Resolves G4 structures, preventing replication pausing and double-strand breaks (DSBs) at G4 motifs. Involved in the maintenance of telomeric DNA. Inhibits telomere elongation, de novo telomere formation and telomere addition to DSBs via catalytic inhibition of telomerase. Reduces the processivity of telomerase by displacing active telomerase from DNA ends. Releases telomerase by unwinding the short telomerase RNA/telomeric DNA hybrid that is the intermediate in the telomerase reaction. Involved in the maintenance of ribosomal (rDNA). Required for efficient fork arrest at the replication fork barrier within rDNA. Involved in the maintenance of mitochondrial (mtDNA). Required to maintain mtDNA under conditions that introduce dsDNA breaks in mtDNA, either preventing or repairing dsDNA breaks. May inhibit replication progression to allow time for repair. May have a general role in chromosomal replication by affecting Okazaki fragment maturation. May have a role in conjunction with DNA2 helicase/nuclease in 5'-flap extension during Okazaki fragment processing. The sequence is that of ATP-dependent DNA helicase PIF1 from Saccharomyces cerevisiae (strain YJM789) (Baker's yeast).